A 202-amino-acid chain; its full sequence is GMP synthase [glutamine-hydrolyzing] subunit A (202 aa).

The 191-residue stretch at 4–194 (KIYVVDNGGQ…IAICQQHKEK (191 aa)) folds into the Glutamine amidotransferase type-1 domain. Cys81 (nucleophile) is an active-site residue. Catalysis depends on residues His168 and Glu170.

Heterodimer composed of a glutamine amidotransferase subunit (A) and a GMP-binding subunit (B).

It carries out the reaction XMP + L-glutamine + ATP + H2O = GMP + L-glutamate + AMP + diphosphate + 2 H(+). It functions in the pathway purine metabolism; GMP biosynthesis; GMP from XMP (L-Gln route): step 1/1. Functionally, catalyzes the synthesis of GMP from XMP. This is GMP synthase [glutamine-hydrolyzing] subunit A from Thermoplasma volcanium (strain ATCC 51530 / DSM 4299 / JCM 9571 / NBRC 15438 / GSS1).